Consider the following 415-residue polypeptide: Light-independent protochlorophyllide reductase subunit N (415 aa).

3 residues coordinate [4Fe-4S] cluster: C16, C41, and C98.

Belongs to the BchN/ChlN family. As to quaternary structure, protochlorophyllide reductase is composed of three subunits; BchL, BchN and BchB. Forms a heterotetramer of two BchB and two BchN subunits. [4Fe-4S] cluster is required as a cofactor.

It carries out the reaction chlorophyllide a + oxidized 2[4Fe-4S]-[ferredoxin] + 2 ADP + 2 phosphate = protochlorophyllide a + reduced 2[4Fe-4S]-[ferredoxin] + 2 ATP + 2 H2O. It participates in porphyrin-containing compound metabolism; bacteriochlorophyll biosynthesis (light-independent). Component of the dark-operative protochlorophyllide reductase (DPOR) that uses Mg-ATP and reduced ferredoxin to reduce ring D of protochlorophyllide (Pchlide) to form chlorophyllide a (Chlide). This reaction is light-independent. The NB-protein (BchN-BchB) is the catalytic component of the complex. In Roseiflexus sp. (strain RS-1), this protein is Light-independent protochlorophyllide reductase subunit N.